The following is a 225-amino-acid chain: Guanylate kinase (225 aa).

Positions 20–198 (GNLFMVVAPS…ALSELQCLVA (179 aa)) constitute a Guanylate kinase-like domain. 27-34 (APSGAGKS) contacts ATP.

Belongs to the guanylate kinase family.

The protein localises to the cytoplasm. The enzyme catalyses GMP + ATP = GDP + ADP. Its function is as follows. Essential for recycling GMP and indirectly, cGMP. The polypeptide is Guanylate kinase (Paraburkholderia xenovorans (strain LB400)).